A 272-amino-acid polypeptide reads, in one-letter code: Magnetosome protein MamQ 1 (272 aa).

The Cytoplasmic segment spans residues 1 to 46 (MALGDANVGSAPGVDFSALQRVKQSEELLAQLYVVEETPRRLGRGP). Residues 47 to 67 (VHALMVISVLSVVAFIATLLM) traverse the membrane as a helical segment. Topologically, residues 68-272 (RYNTFVTMSE…PLNHAQDIKK (205 aa)) are lumenal.

This sequence belongs to the LemA family.

The protein resides in the magnetosome membrane. Essential for magnetosome formation. Can be used to induce magnetosome formation. This is Magnetosome protein MamQ 1 (mamQ1) from Paramagnetospirillum magneticum (strain ATCC 700264 / AMB-1) (Magnetospirillum magneticum).